Reading from the N-terminus, the 124-residue chain is MNNVLYIAAGGAIGAVLRYSISILALQLFGTGFPFGTLIVNVAGSFLMGCIYALAELSHIGPEWKALIGVGLLGALTTFSTFSNETLLLLQQGELVKASLNVLLNLILCLTVVYLGQQLIYSRV.

Transmembrane regions (helical) follow at residues 4 to 24 (VLYIAAGGAIGAVLRYSISIL), 35 to 55 (FGTLIVNVAGSFLMGCIYALA), 60 to 80 (IGPEWKALIGVGLLGALTTFS), and 100 to 120 (LNVLLNLILCLTVVYLGQQLI). Na(+) is bound by residues glycine 74 and threonine 77.

Belongs to the fluoride channel Fluc/FEX (TC 1.A.43) family.

The protein resides in the cell inner membrane. It carries out the reaction fluoride(in) = fluoride(out). Na(+) is not transported, but it plays an essential structural role and its presence is essential for fluoride channel function. Its function is as follows. Fluoride-specific ion channel. Important for reducing fluoride concentration in the cell, thus reducing its toxicity. This Shewanella amazonensis (strain ATCC BAA-1098 / SB2B) protein is Fluoride-specific ion channel FluC.